A 2270-amino-acid chain; its full sequence is Protein DOP1B (2270 aa).

Disordered regions lie at residues 548–572 (METP…VEGE), 697–716 (LKQR…TEEE), and 1084–1145 (QEQD…DMPR). The span at 1095–1145 (ADTSTGHNDSDNTSSFTPSSVDLSSDQNYRDNTAGQVTHKNTGQQNMDMPR) shows a compositional bias: polar residues.

It belongs to the DOP1 family.

The protein resides in the golgi apparatus membrane. In terms of biological role, may be involved in protein traffic between late Golgi and early endosomes. The sequence is that of Protein DOP1B (dop1b) from Xenopus laevis (African clawed frog).